A 229-amino-acid polypeptide reads, in one-letter code: Potassium/proton antiporter CemA (229 aa).

A run of 3 helical transmembrane segments spans residues 6 to 26, 107 to 127, and 189 to 209; these read AFIP…ISLC, ILHF…SFWA, and ILSG…KYWI.

Belongs to the CemA family.

It is found in the plastid. It localises to the chloroplast inner membrane. The enzyme catalyses K(+)(in) + H(+)(out) = K(+)(out) + H(+)(in). Functionally, contributes to K(+)/H(+) antiport activity by supporting proton efflux to control proton extrusion and homeostasis in chloroplasts in a light-dependent manner to modulate photosynthesis. Prevents excessive induction of non-photochemical quenching (NPQ) under continuous-light conditions. Indirectly promotes efficient inorganic carbon uptake into chloroplasts. This Crucihimalaya wallichii (Rock-cress) protein is Potassium/proton antiporter CemA.